A 208-amino-acid polypeptide reads, in one-letter code: MADGDIEIKAGFVDTDLDDRKLTMIDDLNNPLAIVERVYLIWWHWADFHLHVISPHIDTITPAIVIEPELIPGSNDHEFVYSIHDSGSKLSTSKSQDMFSAGMSMCKLFYTIEKMVYILVERLKSGGVSMEAEVQIAFAGHEIAQRKAFESIINLPYNVVVTNFDPGIWGEKYLQNVKRLADKGYGYPPESPRKIYMHPVSSGTTARK.

As to quaternary structure, the T4BSS is a complex nanomachine composed of several subcomplexes. This subunit is part of the Type IV Coupling Complex (T4CC), a subcomplex composed of the DotLMNYZ core and the IcmSW-LvgA adapter subunits, linked by the C-terminal tail of DotL. Interacts with DotL, IcmS and IcmW. Interacts with various effector proteins, including VpdB, SetA, PieA and SidH.

It localises to the cytoplasm. Component of the Dot/Icm type IVB secretion system (T4BSS), which is used to inject bacterial effector proteins into eukaryotic host cells. Part of a subcomplex which recruits effector proteins and delivers them to the core transmembrane subcomplex. Is a critical subunit for binding a subset of effector proteins. Recognizes more than one type of binding motif. May be a critical factor that confers host specificity. The sequence is that of Type 4 adapter protein LvgA from Legionella pneumophila subsp. pneumophila (strain Philadelphia 1 / ATCC 33152 / DSM 7513).